The chain runs to 349 residues: N-acetyl-gamma-glutamyl-phosphate reductase (349 aa).

Cysteine 149 is an active-site residue.

Belongs to the NAGSA dehydrogenase family. Type 1 subfamily.

It localises to the cytoplasm. The enzyme catalyses N-acetyl-L-glutamate 5-semialdehyde + phosphate + NADP(+) = N-acetyl-L-glutamyl 5-phosphate + NADPH + H(+). The protein operates within amino-acid biosynthesis; L-arginine biosynthesis; N(2)-acetyl-L-ornithine from L-glutamate: step 3/4. In terms of biological role, catalyzes the NADPH-dependent reduction of N-acetyl-5-glutamyl phosphate to yield N-acetyl-L-glutamate 5-semialdehyde. In Acinetobacter baylyi (strain ATCC 33305 / BD413 / ADP1), this protein is N-acetyl-gamma-glutamyl-phosphate reductase.